Consider the following 102-residue polypeptide: uncharacterized protein (102 aa).

This is an uncharacterized protein from Escherichia coli (Bacteriophage T4).